We begin with the raw amino-acid sequence, 529 residues long: Probable threonine/serine exporter (529 aa).

The next 10 membrane-spanning stretches (helical) occupy residues 88 to 108, 168 to 188, 212 to 232, 234 to 254, 265 to 285, 312 to 332, 344 to 364, 365 to 385, 389 to 409, and 428 to 448; these read ITVT…PVTI, FALG…LAAV, VFGA…AGQD, TALV…VGSM, ALAR…GILI, MPLP…CLTI, AGLS…AGFG, RVVA…LISI, APAL…LAVF, and LLEA…GEFL. Positions 482 to 501 are disordered; it reads QPAKSQQPTGTGGQRWRSVA.

This sequence belongs to the ThrE exporter (TC 2.A.79) family.

The protein localises to the cell membrane. The catalysed reaction is L-threonine(in) + H(+)(out) = L-threonine(out) + H(+)(in). Functionally, catalyzes the export of L-threonine and L-serine from the cell to the extracellular environment. Export is dependent on the proton motive force. Required for in vitro growth and survival of bacteria inside macrophages. Increased expression is associated with low-level amikacin (AMK) resistance. This is Probable threonine/serine exporter from Mycobacterium tuberculosis (strain ATCC 25618 / H37Rv).